Consider the following 76-residue polypeptide: uncharacterized protein (76 aa).

The first 15 residues, Met1–Gly15, serve as a signal peptide directing secretion.

This is an uncharacterized protein from Magallana gigas (Pacific oyster).